Reading from the N-terminus, the 60-residue chain is Large ribosomal subunit protein bL32 (60 aa).

A compositionally biased stretch (basic residues) spans 1–16; the sequence is MAVPRRKTSPSRRGMR. The disordered stretch occupies residues 1–60; that stretch reads MAVPRRKTSPSRRGMRRSADAIKKPTYVEDKDSGELRRPHHLDLKTGMYKGRQVLKKKDA. Residues 17-44 are compositionally biased toward basic and acidic residues; it reads RSADAIKKPTYVEDKDSGELRRPHHLDL.

Belongs to the bacterial ribosomal protein bL32 family.

The sequence is that of Large ribosomal subunit protein bL32 from Bradyrhizobium sp. (strain BTAi1 / ATCC BAA-1182).